The following is a 282-amino-acid chain: Energy-coupling factor transporter ATP-binding protein EcfA2 (282 aa).

The 234-residue stretch at 1-234 (MKGSPFEKVA…ADELVALGLD (234 aa)) folds into the ABC transporter domain. 28 to 35 (GHTGSGKS) provides a ligand contact to ATP.

The protein belongs to the ABC transporter superfamily. Energy-coupling factor EcfA family. Forms a stable energy-coupling factor (ECF) transporter complex composed of 2 membrane-embedded substrate-binding proteins (S component), 2 ATP-binding proteins (A component) and 2 transmembrane proteins (T component).

It localises to the cell membrane. Its function is as follows. ATP-binding (A) component of a common energy-coupling factor (ECF) ABC-transporter complex. Unlike classic ABC transporters this ECF transporter provides the energy necessary to transport a number of different substrates. The polypeptide is Energy-coupling factor transporter ATP-binding protein EcfA2 (Halalkalibacterium halodurans (strain ATCC BAA-125 / DSM 18197 / FERM 7344 / JCM 9153 / C-125) (Bacillus halodurans)).